A 556-amino-acid polypeptide reads, in one-letter code: 2-succinyl-5-enolpyruvyl-6-hydroxy-3-cyclohexene-1-carboxylate synthase (556 aa).

This sequence belongs to the TPP enzyme family. MenD subfamily. Homodimer. It depends on Mg(2+) as a cofactor. The cofactor is Mn(2+). Thiamine diphosphate is required as a cofactor.

It catalyses the reaction isochorismate + 2-oxoglutarate + H(+) = 5-enolpyruvoyl-6-hydroxy-2-succinyl-cyclohex-3-ene-1-carboxylate + CO2. It functions in the pathway quinol/quinone metabolism; 1,4-dihydroxy-2-naphthoate biosynthesis; 1,4-dihydroxy-2-naphthoate from chorismate: step 2/7. It participates in quinol/quinone metabolism; menaquinone biosynthesis. In terms of biological role, catalyzes the thiamine diphosphate-dependent decarboxylation of 2-oxoglutarate and the subsequent addition of the resulting succinic semialdehyde-thiamine pyrophosphate anion to isochorismate to yield 2-succinyl-5-enolpyruvyl-6-hydroxy-3-cyclohexene-1-carboxylate (SEPHCHC). This is 2-succinyl-5-enolpyruvyl-6-hydroxy-3-cyclohexene-1-carboxylate synthase from Enterobacter sp. (strain 638).